The following is a 224-amino-acid chain: Perchlorate reductase assembly chaperone protein (224 aa).

The protein belongs to the type II DMSO reductase enzyme chaperone family.

The protein resides in the cytoplasm. Functionally, may function as a system-specific molybdenum chaperone protein essential for the assembly of the perchlorate reductase PcrAB complex prior to its periplasmic translocation via the Tat pathway. The chain is Perchlorate reductase assembly chaperone protein (pcrD) from Dechloromonas aromatica (strain RCB).